We begin with the raw amino-acid sequence, 329 residues long: 1-phosphatidylinositol phosphodiesterase (329 aa).

Positions 1–31 (MSNKKLILKLFICSTIFITFVFALHDKRVVA) are cleaved as a signal peptide. Positions 51–194 (NIPLARISIP…ARGKIVLLKR (144 aa)) constitute a PI-PLC X-box domain. His-63 serves as the catalytic Proton acceptor. The Proton donor role is filled by His-113.

The protein resides in the secreted. The catalysed reaction is a 1,2-diacyl-sn-glycero-3-phospho-(1D-myo-inositol) = 1D-myo-inositol 1,2-cyclic phosphate + a 1,2-diacyl-sn-glycerol. Its function is as follows. Cleaves glycosylphosphatidylinositol (GPI) and phosphatidylinositol (PI) anchors but not PI phosphates. This Bacillus thuringiensis protein is 1-phosphatidylinositol phosphodiesterase.